The following is a 304-amino-acid chain: Acetylglutamate kinase (304 aa).

Substrate contacts are provided by residues 70–71 (GG), R92, and N196.

It belongs to the acetylglutamate kinase family. ArgB subfamily.

The protein localises to the cytoplasm. It carries out the reaction N-acetyl-L-glutamate + ATP = N-acetyl-L-glutamyl 5-phosphate + ADP. It participates in amino-acid biosynthesis; L-arginine biosynthesis; N(2)-acetyl-L-ornithine from L-glutamate: step 2/4. Catalyzes the ATP-dependent phosphorylation of N-acetyl-L-glutamate. The protein is Acetylglutamate kinase of Methanococcoides burtonii (strain DSM 6242 / NBRC 107633 / OCM 468 / ACE-M).